The sequence spans 35 residues: Conotoxin Cal6.1f (35 aa).

Residues 1-8 (GLIRPSKR) constitute a propeptide that is removed on maturation. Disulfide bonds link cysteine 9-cysteine 25, cysteine 16-cysteine 29, and cysteine 24-cysteine 34.

The protein belongs to the conotoxin O1 superfamily. In terms of tissue distribution, expressed by the venom duct.

The protein resides in the secreted. Functionally, probable neurotoxin with unknown target. Possibly targets ion channels. This Californiconus californicus (California cone) protein is Conotoxin Cal6.1f.